The sequence spans 276 residues: Sulfur carrier protein FdhD (276 aa).

The Cysteine persulfide intermediate role is filled by Cys122. 259–264 (FCRRGR) contributes to the Mo-bis(molybdopterin guanine dinucleotide) binding site.

This sequence belongs to the FdhD family.

It localises to the cytoplasm. Functionally, required for formate dehydrogenase (FDH) activity. Acts as a sulfur carrier protein that transfers sulfur from IscS to the molybdenum cofactor prior to its insertion into FDH. This Proteus mirabilis (strain HI4320) protein is Sulfur carrier protein FdhD.